A 352-amino-acid chain; its full sequence is Thiamine-phosphate synthase (352 aa).

Residues 1-128 are unknown; it reads MNPTPSETSL…AAEAAAIRYG (128 aa). Residues 63 to 85 are disordered; it reads SYKQARSTSTDTGAGLKHPAQLD. Residues 129–352 are thiamine-phosphate synthase; the sequence is LYDLEVTCLN…LLQQLDQATI (224 aa). Residues 180–184 and Asn-212 contribute to the 4-amino-2-methyl-5-(diphosphooxymethyl)pyrimidine site; that span reads QYRCK. 2 residues coordinate Mg(2+): Asp-213 and Asp-232. 4-amino-2-methyl-5-(diphosphooxymethyl)pyrimidine is bound by residues Ser-251 and Lys-280. Gly-307 contacts 2-[(2R,5Z)-2-carboxy-4-methylthiazol-5(2H)-ylidene]ethyl phosphate.

The protein belongs to the thiamine-phosphate synthase family. Mg(2+) is required as a cofactor.

The catalysed reaction is 2-[(2R,5Z)-2-carboxy-4-methylthiazol-5(2H)-ylidene]ethyl phosphate + 4-amino-2-methyl-5-(diphosphooxymethyl)pyrimidine + 2 H(+) = thiamine phosphate + CO2 + diphosphate. It catalyses the reaction 2-(2-carboxy-4-methylthiazol-5-yl)ethyl phosphate + 4-amino-2-methyl-5-(diphosphooxymethyl)pyrimidine + 2 H(+) = thiamine phosphate + CO2 + diphosphate. It carries out the reaction 4-methyl-5-(2-phosphooxyethyl)-thiazole + 4-amino-2-methyl-5-(diphosphooxymethyl)pyrimidine + H(+) = thiamine phosphate + diphosphate. The protein operates within cofactor biosynthesis; thiamine diphosphate biosynthesis; thiamine phosphate from 4-amino-2-methyl-5-diphosphomethylpyrimidine and 4-methyl-5-(2-phosphoethyl)-thiazole: step 1/1. Condenses 4-methyl-5-(beta-hydroxyethyl)thiazole monophosphate (THZ-P) and 2-methyl-4-amino-5-hydroxymethyl pyrimidine pyrophosphate (HMP-PP) to form thiamine monophosphate (TMP). This chain is Thiamine-phosphate synthase, found in Synechococcus sp. (strain CC9605).